Here is a 484-residue protein sequence, read N- to C-terminus: Deoxyribodipyrimidine photo-lyase (484 aa).

Residues 3 to 132 form the Photolyase/cryptochrome alpha/beta domain; it reads APILFWHRRD…RAVQLWDQLL (130 aa). Residues 36 to 38, Arg-51, and 101 to 109 each bind coenzyme F420-(gamma-Glu)n; these read CLD and DIEPYGRDR. Residues 141–148 are DNA-binding; it reads GSGNPYSV. Tyr-228 provides a ligand contact to FAD. Arg-232 serves as a coordination point for DNA. An FAD-binding site is contributed by 240 to 247; sequence TSGLSPAL. A coenzyme F420-(gamma-Glu)n-binding site is contributed by Lys-248. Interaction with DNA stretches follow at residues 283 to 290 and 349 to 350; these read ELAWREFY and NR. FAD is bound by residues 346 to 352, 380 to 382, and Asn-386; these read WMHNRCW and DGD. 2 residues coordinate DNA: Gln-411 and Lys-472.

It belongs to the DNA photolyase class-1 family. Monomer. The cofactor is FAD. Coenzyme F420-(gamma-Glu)n is required as a cofactor.

The enzyme catalyses cyclobutadipyrimidine (in DNA) = 2 pyrimidine residues (in DNA).. In terms of biological role, involved in repair of UV radiation-induced DNA damage. Catalyzes the light-dependent monomerization (300-600 nm) of cyclobutyl pyrimidine dimers (in cis-syn configuration), which are formed between adjacent bases on the same DNA strand upon exposure to ultraviolet radiation. The chain is Deoxyribodipyrimidine photo-lyase (phr) from Synechococcus sp. (strain ATCC 27144 / PCC 6301 / SAUG 1402/1) (Anacystis nidulans).